The chain runs to 98 residues: Large ribosomal subunit protein uL23 (98 aa).

Belongs to the universal ribosomal protein uL23 family. Part of the 50S ribosomal subunit. Contacts protein L29, and trigger factor when it is bound to the ribosome.

Its function is as follows. One of the early assembly proteins it binds 23S rRNA. One of the proteins that surrounds the polypeptide exit tunnel on the outside of the ribosome. Forms the main docking site for trigger factor binding to the ribosome. In Lactobacillus delbrueckii subsp. bulgaricus (strain ATCC 11842 / DSM 20081 / BCRC 10696 / JCM 1002 / NBRC 13953 / NCIMB 11778 / NCTC 12712 / WDCM 00102 / Lb 14), this protein is Large ribosomal subunit protein uL23.